Here is a 1355-residue protein sequence, read N- to C-terminus: Phospholipid-transporting ATPase DRS2 (1355 aa).

The span at 1 to 15 shows a compositional bias: basic and acidic residues; sequence MNDDRETPPKRKPGE. Residues 1–50 are disordered; that stretch reads MNDDRETPPKRKPGEDDTLFDIDFLDDTTSHSGSRSKVTNSHANANYIPP. The involved in autoinhibition stretch occupies residues 1-104; the sequence is MNDDRETPPK…SDAYQPQSLR (104 aa). Residues 1 to 221 are Cytoplasmic-facing; the sequence is MNDDRETPPK…TFLPKFLFQE (221 aa). Acidic residues predominate over residues 16 to 26; sequence DDTLFDIDFLD. Polar residues predominate over residues 30–44; it reads SHSGSRSKVTNSHAN. The residue at position 102 (serine 102) is a Phosphoserine. A helical transmembrane segment spans residues 222–242; the sequence is FSKYANLFFLCTSAIQQVPHV. Positions 237-238 are involved in phosphatidylserine substrate recognition; the sequence is QQ. Over 243 to 246 the chain is Lumenal; the sequence is SPTN. A helical transmembrane segment spans residues 247-267; the sequence is RYTTIGTLLVVLIVSAMKECI. The Cytoplasmic portion of the chain corresponds to 268–449; the sequence is EDIKRANSDK…VEKIINRQII (182 aa). Residues 450-470 traverse the membrane as a helical segment; sequence ALFTVLIVLILISSIGNVIMS. At 471 to 490 the chain is on the lumenal side; it reads TADAKHLSYLYLEGTNKAGL. Residues 491–511 form a helical membrane-spanning segment; it reads FFKDFLTFWILFSNLVPISLF. The Cytoplasmic segment spans residues 512–1012; sequence VTVELIKYYQ…WSYQRISVAI (501 aa). Aspartate 560 (4-aspartylphosphate intermediate) is an active-site residue. ATP contacts are provided by aspartate 560, lysine 561, threonine 562, glutamate 655, phenylalanine 698, serine 700, lysine 703, lysine 721, arginine 755, threonine 756, threonine 835, glycine 836, aspartate 837, arginine 928, and lysine 934. Aspartate 560 is a Mg(2+) binding site. Threonine 562 contributes to the Mg(2+) binding site. Residue aspartate 954 coordinates Mg(2+). 2 residues coordinate ATP: asparagine 957 and aspartate 958. Aspartate 958 serves as a coordination point for Mg(2+). A helical membrane pass occupies residues 1013–1033; it reads LYSFYKNTALYMTQFWYVFAN. The Lumenal segment spans residues 1034 to 1043; the sequence is AFSGQSIMES. A helical membrane pass occupies residues 1044–1064; it reads WTMSFYNLFFTVWPPFVIGVF. At 1065–1094 the chain is on the cytoplasmic side; the sequence is DQFVSSRLLERYPQLYKLGQKGQFFSVYIF. A helical transmembrane segment spans residues 1095–1115; sequence WGWIINGFFHSAIVFIGTILI. Residues 1116–1131 are Lumenal-facing; the sequence is YRYGFALNMHGELADH. Residues 1132-1152 traverse the membrane as a helical segment; the sequence is WSWGVTVYTTSVIIVLGKAAL. A 1,2-diacyl-sn-glycero-3-phospho-(1D-myo-inositol 4-phosphate) is bound at residue lysine 1149. At 1153–1161 the chain is on the cytoplasmic side; it reads VTNQWTKFT. Residues 1162 to 1182 form a helical membrane-spanning segment; sequence LIAIPGSLLFWLIFFPIYASI. At 1183-1202 the chain is on the lumenal side; sequence FPHANISREYYGVVKHTYGS. Residues 1203–1223 form a helical membrane-spanning segment; the sequence is GVFWLTLIVLPIFALVRDFLW. A 1,2-diacyl-sn-glycero-3-phospho-(1D-myo-inositol 4-phosphate) is bound by residues arginine 1219, tryptophan 1223, lysine 1224, tyrosine 1235, and histidine 1236. Residues 1224-1355 are Cytoplasmic-facing; sequence KYYKRMYEPE…SSRDDISFDI (132 aa). The interval 1230–1282 is interaction with GEA2; that stretch reads YEPETYHVIQEMQKYNISDSRPHVQQFQNAIRKVRQVQRMKKQRGFAFSQAEE. The involved in autoinhibition stretch occupies residues 1231–1309; it reads EPETYHVIQE…KYGELQDASA (79 aa). Residues 1305 to 1355 are disordered; sequence QDASANPFNDNNGLGSNDFESAEPFIENPFADGNQNSNRFSSSRDDISFDI. The span at 1307-1323 shows a compositional bias: polar residues; the sequence is ASANPFNDNNGLGSNDF. Positions 1346 to 1355 are enriched in basic and acidic residues; the sequence is SSRDDISFDI.

Belongs to the cation transport ATPase (P-type) (TC 3.A.3) family. Type IV subfamily. Component of a flippase complex consisting of DRS2 and CDC50. Interacts with CDC50; the interaction is direct, is required for their mutual export from the endoplasmic reticulum, and preferentially occurs when DRS2 is in the E2P state. Interacts (via C-terminus) with GEA2 (via SEC7 domain); the interaction is direct. Interacts with GEA1. Mg(2+) serves as cofactor.

The protein localises to the golgi apparatus. The protein resides in the trans-Golgi network membrane. Its subcellular location is the endosome membrane. The enzyme catalyses ATP + H2O + phospholipidSide 1 = ADP + phosphate + phospholipidSide 2.. It carries out the reaction a 1,2-diacyl-sn-glycero-3-phospho-L-serine(out) + ATP + H2O = a 1,2-diacyl-sn-glycero-3-phospho-L-serine(in) + ADP + phosphate + H(+). The catalysed reaction is a 1,2-diacyl-sn-glycero-3-phosphoethanolamine(out) + ATP + H2O = a 1,2-diacyl-sn-glycero-3-phosphoethanolamine(in) + ADP + phosphate + H(+). Allosterically activated by binding 1,2-diacyl-sn-glycero-3-phospho-(1D-myo-inositol 4-phosphate) (phosphatidylinositol 4-phosphate). Inhibited by orthovanadate, N-ethylmaleimide, trifluoroberyllate and tetrafluoroaluminate; orthovanadate and N-ethylmaleimide inhibit phosphorylation of the active site aspartic acid. The ATPase activity is not potently stimulated by phosphatidylinositol 3-phosphate and phosphatidylinositol 5-phosphate, phosphatidylinositol 4,5-bisphosphate or phosphatidylcholine. Not inhibited by azide. In terms of biological role, catalytic component of a P4-ATPase flippase complex which catalyzes the hydrolysis of ATP coupled to the transport of phosphatidylserine and small amounts of ethanolamine from the lumen to the cytosolic leaflet of the trans-Golgi network and ensures the maintenance of asymmetric distribution of phospholipids. Contributes to clathrin-coated vesicle formation, endocytosis, and protein trafficking between the Golgi and endosomal system. Does not appear to transport phosphatidylcholine or sphingomyelin. This chain is Phospholipid-transporting ATPase DRS2, found in Saccharomyces cerevisiae (strain ATCC 204508 / S288c) (Baker's yeast).